A 479-amino-acid polypeptide reads, in one-letter code: Glucagon receptor (479 aa).

The first 25 residues, 1-25 (MPPARLRHPHLLLLLLLACQPQAPA), serve as a signal peptide directing secretion. At 26–136 (AQAMDFLFQK…ELGVQREVAE (111 aa)) the chain is on the extracellular side. 3 disulfide bridges follow: Cys-43–Cys-67, Cys-58–Cys-100, and Cys-81–Cys-121. N-linked (GlcNAc...) asparagine glycosylation is found at Asn-46, Asn-59, Asn-74, Asn-78, and Asn-117. The chain crosses the membrane as a helical span at residues 137-161 (MYSSFQAMYTAGYSLSLAALLLALA). Residues 162–173 (ILLGLSKLHCTR) are Cytoplasmic-facing. Residues 174–198 (NYIHANLLASFVLRASSVLALDALL) traverse the membrane as a helical segment. The Extracellular segment spans residues 199–225 (KTRYSQRLGDDLSVSIWLSDEAVAGCR). Cys-224 and Cys-294 are joined by a disulfide. Residues 226–249 (VAAVFMQYGVVANYCWLLVEGVYL) form a helical membrane-spanning segment. The Cytoplasmic segment spans residues 250–263 (HSLLRQATIPERSC). A helical transmembrane segment spans residues 264 to 285 (FPLYLAIGWGAPMLFVIPWAVV). Residues 286–303 (KCLFENIQCWTSNDNMGF) are Extracellular-facing. A helical membrane pass occupies residues 304-326 (WWILRFPVFLAILINFSIFIRVL). Residues 327-350 (HVLVAKLRAHQMRCTDYKFRLARS) are Cytoplasmic-facing. Residues 351-369 (TLTLIPLLGVHEVVFAFVT) form a helical membrane-spanning segment. The Extracellular segment spans residues 370-381 (DEHAQGALRSAK). A helical membrane pass occupies residues 382–402 (LFFDLFLSSFQGLLVAVLYCF). The Cytoplasmic portion of the chain corresponds to 403–479 (LNKEVQAELL…GLPGVAENPF (77 aa)). The interval 426-479 (KAHRVGSHSARPPSGPPSEKLLLSTGGSSNGTSQEPSAETHLASGLPGVAENPF) is disordered. A compositionally biased stretch (low complexity) spans 446–458 (LLLSTGGSSNGTS). Ser-458 bears the Phosphoserine mark.

The protein belongs to the G-protein coupled receptor 2 family. In terms of processing, ligand-binding promotes phosphorylation of serine residues in the C-terminal cytoplasmic domain. Phosphorylation is important for receptor endocytosis after ligand-binding.

The protein resides in the cell membrane. G-protein coupled receptor for glucagon that plays a central role in the regulation of blood glucose levels and glucose homeostasis. Regulates the rate of hepatic glucose production by promoting glycogen hydrolysis and gluconeogenesis. Plays an important role in mediating the responses to fasting. Ligand binding causes a conformation change that triggers signaling via guanine nucleotide-binding proteins (G proteins) and modulates the activity of down-stream effectors, such as adenylate cyclase. Promotes activation of adenylate cyclase. Besides, plays a role in signaling via a phosphatidylinositol-calcium second messenger system. The sequence is that of Glucagon receptor from Sus scrofa (Pig).